Here is a 61-residue protein sequence, read N- to C-terminus: Large ribosomal subunit protein uL30 (61 aa).

This sequence belongs to the universal ribosomal protein uL30 family. In terms of assembly, part of the 50S ribosomal subunit.

The polypeptide is Large ribosomal subunit protein uL30 (Treponema pallidum subsp. pallidum (strain SS14)).